The following is a 124-amino-acid chain: Large ribosomal subunit protein eL22z (124 aa).

It belongs to the eukaryotic ribosomal protein eL22 family.

The chain is Large ribosomal subunit protein eL22z (RPL22B) from Arabidopsis thaliana (Mouse-ear cress).